A 466-amino-acid polypeptide reads, in one-letter code: 3-isopropylmalate dehydratase large subunit (466 aa).

Cys347, Cys407, and Cys410 together coordinate [4Fe-4S] cluster.

Belongs to the aconitase/IPM isomerase family. LeuC type 1 subfamily. Heterodimer of LeuC and LeuD. [4Fe-4S] cluster is required as a cofactor.

It catalyses the reaction (2R,3S)-3-isopropylmalate = (2S)-2-isopropylmalate. It participates in amino-acid biosynthesis; L-leucine biosynthesis; L-leucine from 3-methyl-2-oxobutanoate: step 2/4. Its function is as follows. Catalyzes the isomerization between 2-isopropylmalate and 3-isopropylmalate, via the formation of 2-isopropylmaleate. The sequence is that of 3-isopropylmalate dehydratase large subunit from Acidiphilium cryptum (strain JF-5).